A 218-amino-acid polypeptide reads, in one-letter code: Embryonic polyadenylate-binding protein 2-A (218 aa).

The span at 1–16 (MSERVSEEPGLDKGDG) shows a compositional bias: basic and acidic residues. Disordered stretches follow at residues 1–26 (MSER…DDPE) and 169–218 (RTNM…NHPY). One can recognise an RRM domain in the interval 93–170 (RSVYVGNVDY…RTIKVLPKRT (78 aa)). The segment covering 205–218 (FRGCGRPGPLNHPY) has biased composition (low complexity).

Its subcellular location is the cytoplasm. Binds the poly(A) tail of mRNA. Unable to interact with the cap-binding complex and is therefore unlikely to be involved in translation initiation. The protein is Embryonic polyadenylate-binding protein 2-A (Pabpn1l-a) of Xenopus laevis (African clawed frog).